The following is a 295-amino-acid chain: Cytidine deaminase (295 aa).

CMP/dCMP-type deaminase domains lie at Glu48 to Ala168 and Asp187 to Leu295. Asn89 to Glu91 is a substrate binding site. His102 lines the Zn(2+) pocket. Catalysis depends on Glu104, which acts as the Proton donor. Zn(2+) is bound by residues Cys129 and Cys132.

The protein belongs to the cytidine and deoxycytidylate deaminase family. As to quaternary structure, homodimer. It depends on Zn(2+) as a cofactor.

The enzyme catalyses cytidine + H2O + H(+) = uridine + NH4(+). It carries out the reaction 2'-deoxycytidine + H2O + H(+) = 2'-deoxyuridine + NH4(+). Its function is as follows. This enzyme scavenges exogenous and endogenous cytidine and 2'-deoxycytidine for UMP synthesis. This is Cytidine deaminase from Vibrio cholerae serotype O1 (strain ATCC 39541 / Classical Ogawa 395 / O395).